Here is a 288-residue protein sequence, read N- to C-terminus: Protein PXR1 (288 aa).

One can recognise a G-patch domain in the interval glutamine 25–lysine 72. The tract at residues serine 147 to arginine 258 is disordered. The segment covering serine 157–aspartate 166 has biased composition (acidic residues). Basic residues-rich tracts occupy residues lysine 169 to lysine 185 and lysine 195 to lysine 214. The segment covering arginine 238–serine 256 has biased composition (low complexity).

The protein belongs to the PINX1 family.

Its subcellular location is the nucleus. The protein localises to the nucleolus. Functionally, involved in rRNA-processing at A0, A1 and A2 sites and negatively regulates telomerase. This Candida glabrata (strain ATCC 2001 / BCRC 20586 / JCM 3761 / NBRC 0622 / NRRL Y-65 / CBS 138) (Yeast) protein is Protein PXR1 (PXR1).